Here is a 204-residue protein sequence, read N- to C-terminus: Small ribosomal subunit protein uS7 (204 aa).

Belongs to the universal ribosomal protein uS7 family. As to quaternary structure, part of the 30S ribosomal subunit.

Functionally, one of the primary rRNA binding proteins, it binds directly to 16S rRNA where it nucleates assembly of the head domain of the 30S subunit. Is located at the subunit interface close to the decoding center. This Methanoregula boonei (strain DSM 21154 / JCM 14090 / 6A8) protein is Small ribosomal subunit protein uS7.